The primary structure comprises 135 residues: Large ribosomal subunit protein uL16c (135 aa).

It belongs to the universal ribosomal protein uL16 family. Part of the 50S ribosomal subunit.

It is found in the plastid. The protein resides in the chloroplast. The sequence is that of Large ribosomal subunit protein uL16c from Nandina domestica (Heavenly bamboo).